The following is an 804-amino-acid chain: Zinc finger protein 541 (804 aa).

Disordered regions lie at residues 21-120 (SKAS…NPDI) and 133-197 (TLDL…GNPR). The segment at 285 to 307 (FICKNCSQMFYTEKGLSSHMCFH) adopts a C2H2-type 1 zinc-finger fold. The interval 379–426 (MEQEKDGEERDSKESSQQRKRKKRPPPKRLFIPPPPSTAGEPGPAGCH) is disordered. Residues 380 to 395 (EQEKDGEERDSKESSQ) are compositionally biased toward basic and acidic residues. A compositionally biased stretch (basic residues) spans 396-405 (QRKRKKRPPP). In terms of domain architecture, ELM2 spans 509 to 601 (PHINIGSRFQ…VALETLLLRG (93 aa)). The SANT domain maps to 616-667 (TGSDVWTPIEKRLFKKAFYAHKKDFYLIHKTIQTKTVAQCVEYYYIWKKMIK). The interval 680–743 (VKREPEEVER…TPEPSGSVES (64 aa)) is disordered. Over residues 690 to 721 (TEEKVPCSPRERPSHHPIPELKIKTKSYRRES) the composition is skewed to basic and acidic residues. The C2H2-type 2 zinc-finger motif lies at 747–769 (FPCRECERVFDKIKSRNAHMKRH).

In terms of assembly, interacts with DNTTIP1. Identified in a complex with KCDT19, HDAC1 and HSPA2s. Component of a histone deacetylase complex containing DNTTIP1, ZNF541, HDAC1 and HDAC2. Identified in a complex with HDAC1, HDAC2, DNTTIP1 and KCTD19.

It is found in the nucleus. In terms of biological role, transcription regulator which is essential for male fertility and for the completion of meiotic prophase in spermatocytes. Regulates progression of the pachytene stage of meiotic prophase by activating the expression of genes involved in meiosis and post-meiosis during spermatogenesis. Maintains the repression of pre-pachytene transcriptional programs, including meiotic double-strand breaks (DSB) formation genes in pachytene spermatocytes and suppresses aberrant DSB formation after mid-pachytene, thus ensuring meiosis progression. In Macaca fascicularis (Crab-eating macaque), this protein is Zinc finger protein 541 (ZNF541).